A 437-amino-acid chain; its full sequence is 5-hydroxytryptamine receptor 3B (437 aa).

Residues Met-1–Pro-21 form the signal peptide. Residues Gln-22–Tyr-238 lie on the Extracellular side of the membrane. N-linked (GlcNAc...) asparagine glycosylation is found at Asn-25, Asn-92, and Asn-134. Cys-151 and Cys-165 are disulfide-bonded. The chain crosses the membrane as a helical span at residues Val-239–Leu-259. At Pro-260–Arg-264 the chain is on the cytoplasmic side. The chain crosses the membrane as a helical span at residues Ala-265–Val-282. N-linked (GlcNAc...) asparagine glycosylation occurs at Asn-283. Residues Asn-283–Ala-292 lie on the Extracellular side of the membrane. Residues Gly-293–Leu-313 form a helical membrane-spanning segment. The Cytoplasmic portion of the chain corresponds to Ser-314–Gln-410. An HA-stretch; determines single-channel conductance in 5-HT3 receptors region spans residues Phe-377 to Asp-409. Residues Leu-411 to Trp-431 traverse the membrane as a helical segment. Topologically, residues Ala-432–Met-437 are extracellular.

Belongs to the ligand-gated ion channel (TC 1.A.9) family. 5-hydroxytryptamine receptor (TC 1.A.9.2) subfamily. HTR3B sub-subfamily. As to quaternary structure, forms homopentameric as well as heteropentameric serotonin-activated cation-selective channel complexes with HTR3A. The homomeric complex is not functional. Heteropentameric complexes display properties which resemble that of neuronal serotonin-activated channels in vivo. N-glycosylation is required for membrane localization.

Its subcellular location is the postsynaptic cell membrane. The protein resides in the cell membrane. It carries out the reaction Na(+)(in) = Na(+)(out). The catalysed reaction is K(+)(in) = K(+)(out). The enzyme catalyses Ca(2+)(in) = Ca(2+)(out). Functionally, forms serotonin (5-hydroxytryptamine/5-HT3)-activated cation-selective channel complexes, which when activated cause fast, depolarizing responses in neurons. This chain is 5-hydroxytryptamine receptor 3B, found in Mus musculus (Mouse).